Here is a 107-residue protein sequence, read N- to C-terminus: Phosphoribosyl-ATP pyrophosphatase (107 aa).

This sequence belongs to the PRA-PH family.

Its subcellular location is the cytoplasm. It carries out the reaction 1-(5-phospho-beta-D-ribosyl)-ATP + H2O = 1-(5-phospho-beta-D-ribosyl)-5'-AMP + diphosphate + H(+). Its pathway is amino-acid biosynthesis; L-histidine biosynthesis; L-histidine from 5-phospho-alpha-D-ribose 1-diphosphate: step 2/9. This Caulobacter vibrioides (strain ATCC 19089 / CIP 103742 / CB 15) (Caulobacter crescentus) protein is Phosphoribosyl-ATP pyrophosphatase (hisE).